The following is a 106-amino-acid chain: UPF0473 protein SSU98_0068 (106 aa).

It belongs to the UPF0473 family.

The sequence is that of UPF0473 protein SSU98_0068 from Streptococcus suis (strain 98HAH33).